Consider the following 790-residue polypeptide: Chorion peroxidase (790 aa).

The first 16 residues, 1-16, serve as a signal peptide directing secretion; sequence MAKKVLLLSLYSAVLS. The propeptide occupies 17-209; that stretch reads TWFGFGYVQC…ARIPRAIRKR (193 aa). At cysteine 210 the chain carries N-acetylcysteine; in Chorion peroxidase light chain. Cysteines 216 and 229 form a disulfide. A glycan (N-linked (Man) tryptophan) is linked at tryptophan 259. The Proton acceptor role is filled by histidine 305. N-linked (GlcNAc...) asparagine glycosylation occurs at asparagine 327. The residue at position 353 (tyrosine 353) is a 3',4'-dihydroxyphenylalanine. Cysteine 433 and cysteine 440 are joined by a disulfide. N-linked (Man) tryptophan glycosylation is present at tryptophan 479. Histidine 551 serves as a coordination point for heme b. Residue tryptophan 680 is glycosylated (N-linked (Man) tryptophan). An intrachain disulfide couples cysteine 746 to cysteine 774. An N-linked (Man) tryptophan glycan is attached at tryptophan 785.

Belongs to the peroxidase family. XPO subfamily. As to quaternary structure, heterodimer. Requires heme b as cofactor. N-glycosylated on Trp by mannose and on Asn by N-acetylglucosamine. In terms of processing, there is a hexose glycosylation of an unidentified residue between 654 and 708; Trp-680 is conserved in closely related species and is probably mannosylated.

The protein localises to the secreted. The catalysed reaction is 2 a phenolic donor + H2O2 = 2 a phenolic radical donor + 2 H2O. Its activity is regulated as follows. Extremely resistant to denaturating agents, such as SDS and organic solvents. In terms of biological role, involved in the formation of a rigid and insoluble egg chorion by catalyzing chorion protein cross-linking through dityrosine formation and phenol oxidase-catalyzed chorion melanization. This chain is Chorion peroxidase (pxt), found in Aedes aegypti (Yellowfever mosquito).